We begin with the raw amino-acid sequence, 422 residues long: Histidine--tRNA ligase (422 aa).

Belongs to the class-II aminoacyl-tRNA synthetase family. Homodimer.

It localises to the cytoplasm. The catalysed reaction is tRNA(His) + L-histidine + ATP = L-histidyl-tRNA(His) + AMP + diphosphate + H(+). The protein is Histidine--tRNA ligase of Alcanivorax borkumensis (strain ATCC 700651 / DSM 11573 / NCIMB 13689 / SK2).